The primary structure comprises 313 residues: MTLQQIKEIYSRPLTELILQALEIHNKNFGNDIELCSLKSIKTGTCPEDCKYCPQSGHYNTSIEKHKLLDKDSILAEAKNAKDAGSKRFCMGAAWKHIPKKDFDQVAEIITEVKNLGLETCVTLGSINADEATKLKQAGLDYYNHNLDTSREFYPEIITTRKFEERIETIRNVANADINVCCGGILGMGESLDDRFNLLLELLQLPAAPKSIPINTLIPVKGTPLGDKYTNAQIDSFELVRFIATTRILFPQARLRLSAGRENMSLETQTLCFLAGINSIFYGNKLLTENNATVNSDNFLLAKLGLKSNAELC.

Positions 28–258 constitute a Radical SAM core domain; the sequence is NFGNDIELCS…LFPQARLRLS (231 aa). Residues C46, C50, and C53 each coordinate [4Fe-4S] cluster. C90, C121, C181, and R256 together coordinate [2Fe-2S] cluster.

The protein belongs to the radical SAM superfamily. Biotin synthase family. Homodimer. Requires [4Fe-4S] cluster as cofactor. [2Fe-2S] cluster serves as cofactor.

It catalyses the reaction (4R,5S)-dethiobiotin + (sulfur carrier)-SH + 2 reduced [2Fe-2S]-[ferredoxin] + 2 S-adenosyl-L-methionine = (sulfur carrier)-H + biotin + 2 5'-deoxyadenosine + 2 L-methionine + 2 oxidized [2Fe-2S]-[ferredoxin]. It participates in cofactor biosynthesis; biotin biosynthesis; biotin from 7,8-diaminononanoate: step 2/2. In terms of biological role, catalyzes the conversion of dethiobiotin (DTB) to biotin by the insertion of a sulfur atom into dethiobiotin via a radical-based mechanism. The protein is Biotin synthase of Francisella tularensis subsp. tularensis (strain WY96-3418).